The chain runs to 262 residues: Type III pantothenate kinase (262 aa).

Aspartate 7 to lysine 14 is an ATP binding site. Substrate-binding positions include tyrosine 96 and glycine 103–arginine 106. Residue aspartate 105 is the Proton acceptor of the active site. Threonine 137 contributes to the ATP binding site. Position 187 (threonine 187) interacts with substrate.

The protein belongs to the type III pantothenate kinase family. As to quaternary structure, homodimer. The cofactor is NH4(+). It depends on K(+) as a cofactor.

It is found in the cytoplasm. The catalysed reaction is (R)-pantothenate + ATP = (R)-4'-phosphopantothenate + ADP + H(+). It participates in cofactor biosynthesis; coenzyme A biosynthesis; CoA from (R)-pantothenate: step 1/5. Functionally, catalyzes the phosphorylation of pantothenate (Pan), the first step in CoA biosynthesis. The polypeptide is Type III pantothenate kinase (Leptothrix cholodnii (strain ATCC 51168 / LMG 8142 / SP-6) (Leptothrix discophora (strain SP-6))).